Consider the following 773-residue polypeptide: Elongin-A (773 aa).

The TFIIS N-terminal domain occupies 4-79 (ESALQVVEKL…AQWKKLVPVE (76 aa)). The segment covering 79 to 93 (ERNNEAEDQDFEKSN) has biased composition (basic and acidic residues). Positions 79–480 (ERNNEAEDQD…PRKVPTDVLP (402 aa)) are disordered. The span at 112–124 (YQESWQASGSQPY) shows a compositional bias: polar residues. Over residues 136-156 (LPELERPHKVAHGHERRDERK) the composition is skewed to basic and acidic residues. Positions 162–174 (SPPYSSDPESSDY) are enriched in low complexity. A Phosphoserine modification is found at S195. A compositionally biased stretch (basic residues) spans 239 to 248 (KPHKSSHKEK). 2 stretches are compositionally biased toward basic and acidic residues: residues 249–265 (RPVD…MGRE) and 271–304 (SSKE…EGNS). S310 is subject to Phosphoserine. 2 stretches are compositionally biased toward basic and acidic residues: residues 317–339 (SDNH…KNKQ) and 368–380 (QEGK…DRKS). A phosphoserine mark is found at S380 and S383. K430 is modified (N6-acetyllysine). S515 bears the Phosphoserine mark. The segment at 521-680 (EAGFTGRRMN…PPRDVRRRQE (160 aa)) is activation domain. A BC-box region spans residues 549–558 (TLHQQCIRVL). An F-box domain is found at 565–609 (IFEVGGVPYSVLEPVLERCTPDQLYRIEECNHVLIEETDQLWKVH). The interval 671 to 747 (PPRDVRRRQE…VASSSVSYDP (77 aa)) is disordered. Residues 704-718 (SSHVPASNSSSSFHS) are compositionally biased toward low complexity. The span at 728-744 (PSTSSAHLAPVASSSVS) shows a compositional bias: polar residues.

In terms of assembly, heterotrimer of an A (ELOA, ELOA2 or ELOA3P), ELOB and ELOC subunit. Part of a multisubunit ubiquitin ligase complex consisting of elongin BC complex (ELOB and ELOC), elongin A/ELOA, RBX1 and CUL5. Interacts with ERCC6; the interaction is induced by DNA damaging agents or inhibitors of RNA polymerase II elongation. Interacts (via BC-box) with CUL5.

Its subcellular location is the nucleus. Functionally, SIII, also known as elongin, is a general transcription elongation factor that increases the RNA polymerase II transcription elongation past template-encoded arresting sites. Subunit A is transcriptionally active and its transcription activity is strongly enhanced by binding to the dimeric complex of the SIII regulatory subunits B and C (elongin BC complex). As part of a multisubunit complex composed of elongin BC complex (ELOB and ELOC), elongin A/ELOA, RBX1 and CUL5; polyubiquitinates monoubiquitinated POLR2A. The sequence is that of Elongin-A (Eloa) from Rattus norvegicus (Rat).